Reading from the N-terminus, the 460-residue chain is V-type ATP synthase beta chain (460 aa).

The protein belongs to the ATPase alpha/beta chains family.

Its function is as follows. Produces ATP from ADP in the presence of a proton gradient across the membrane. The V-type beta chain is a regulatory subunit. The sequence is that of V-type ATP synthase beta chain from Clostridium perfringens (strain ATCC 13124 / DSM 756 / JCM 1290 / NCIMB 6125 / NCTC 8237 / Type A).